Reading from the N-terminus, the 122-residue chain is Large ribosomal subunit protein uL14 (122 aa).

This sequence belongs to the universal ribosomal protein uL14 family. Part of the 50S ribosomal subunit. Forms a cluster with proteins L3 and L19. In the 70S ribosome, L14 and L19 interact and together make contacts with the 16S rRNA in bridges B5 and B8.

Binds to 23S rRNA. Forms part of two intersubunit bridges in the 70S ribosome. The polypeptide is Large ribosomal subunit protein uL14 (Desulfotalea psychrophila (strain LSv54 / DSM 12343)).